The chain runs to 391 residues: MGKSDFLSPKAIANRIKSKGLQKLRWYCQMCQKQCRDENGFKCHCMSESHQRQLLLASENPQQFMDYFSEEFRNDFLELLRRRFGTKRVHNNIVYNEYISHREHIHMNATQWETLTDFTKWLGREGLCKVDETPKGWYIQYIDRDPETIRRQLELEKKKKQDLDDEEKTAKFIEEQVRRGLEGKEQETPVFTELSRENEEEKVTFNLNKGAGGSAGATTSKSSSLGPSALKLLGSAASGKRKESSQSSAQPAKKKKSALDEIMELEEEKKRTARTDAWLQPGIVVKIITKKLGEKYHKKKGVVKEVIDRYTAVVKMTDSGDRLKLDQTHLETVIPAPGKRVLVLNGGYRGNEGTLESINEKAFSATIVIETGPLKGRRVEGIQYEDISKLA.

A C2H2-type zinc finger spans residues 28–50; it reads CQMCQKQCRDENGFKCHCMSESH. The tract at residues 51–160 is winged helix-turn-helix (wHTH); it reads QRQLLLASEN…RQLELEKKKK (110 aa). At Lys135 the chain carries N6,N6,N6-trimethyllysine; by METTL22; alternate. Lys135 carries the post-translational modification N6-methyllysine; alternate. Coiled coils occupy residues 147–180 and 252–275; these read ETIR…VRRG and AKKK…TART. Residues 206–258 form a disordered region; it reads NLNKGAGGSAGATTSKSSSLGPSALKLLGSAASGKRKESSQSSAQPAKKKKSA. The interval 282–332 is C-terminal subdomain A; it reads GIVVKIITKKLGEKYHKKKGVVKEVIDRYTAVVKMTDSGDRLKLDQTHLET. Residues 338 to 389 form a C-terminal subdomain B region; that stretch reads GKRVLVLNGGYRGNEGTLESINEKAFSATIVIETGPLKGRRVEGIQYEDISK.

Belongs to the KIN17 family. Associated with DNA polymerase alpha, RFC1 and cyclin A, in multiprotein DNA replication complexes. Also associates with replication origins at the G1/S phase boundary and throughout the S phase in vivo. As to expression, highly expressed in transformed mouse AtT20 neuroendocrine cells. Expressed at a lower level in testis, kidney, skeletal muscle, liver, lung, spleen, brain and heart and kidney. In testis, expressed at much higher levels in proliferating cells than in differentiating cells. Not detected in embryo.

Its subcellular location is the nucleus. It localises to the cytoplasm. Involved in DNA replication and the cellular response to DNA damage. May participate in DNA replication factories and create a bridge between DNA replication and repair mediated by high molecular weight complexes. May play a role in illegitimate recombination and regulation of gene expression. May participate in mRNA processing. Binds, in vitro, to double-stranded DNA. Also shown to bind preferentially to curved DNA in vitro and in vivo. Binds via its C-terminal domain to RNA in vitro. The polypeptide is DNA/RNA-binding protein KIN17 (Mus musculus (Mouse)).